The primary structure comprises 492 residues: GlcNAc-binding protein A (492 aa).

The signal sequence occupies residues 1–23; that stretch reads MNKSSTKTLIALSMMAVSSGVSA. Positions 24-204 constitute a Chitin-binding type-4 domain; that stretch reads HGYVSETNDG…AFYNVIDVKF (181 aa). Positions 443 to 484 constitute a Chitin-binding type-3 domain; the sequence is AGTKVLAEDGNVYQCKEFPYSGYCVQWTETATNFAPGVGSDW.

Belongs to the GbpA family.

It localises to the secreted. In terms of biological role, probably interacts with GlcNAc residues. May promote attachment to both epithelial cell surfaces and chitin. This chain is GlcNAc-binding protein A, found in Aliivibrio fischeri (strain ATCC 700601 / ES114) (Vibrio fischeri).